Reading from the N-terminus, the 198-residue chain is dTTP/UTP pyrophosphatase (198 aa).

Aspartate 75 acts as the Proton acceptor in catalysis.

The protein belongs to the Maf family. YhdE subfamily. A divalent metal cation serves as cofactor.

It localises to the cytoplasm. The catalysed reaction is dTTP + H2O = dTMP + diphosphate + H(+). It catalyses the reaction UTP + H2O = UMP + diphosphate + H(+). Nucleoside triphosphate pyrophosphatase that hydrolyzes dTTP and UTP. May have a dual role in cell division arrest and in preventing the incorporation of modified nucleotides into cellular nucleic acids. The polypeptide is dTTP/UTP pyrophosphatase (Wolbachia sp. subsp. Drosophila simulans (strain wRi)).